A 333-amino-acid chain; its full sequence is Photosystem II assembly lipoprotein Ycf48 (333 aa).

Positions 1 to 23 (MNRLLSSAVNLLLVLVLGVGLSG) are cleaved as a signal peptide. Residue Cys-24 is the site of N-palmitoyl cysteine attachment. The S-diacylglycerol cysteine moiety is linked to residue Cys-24.

This sequence belongs to the Ycf48 family. Part of early PSII assembly complexes which includes D1 (psbA) and PsbI; not found in mature PSII. Binds to the lumenal side of PSII complexes. Interacts with YidC.

The protein resides in the cellular thylakoid membrane. Functionally, a factor required for optimal assembly of photosystem II (PSII), acting in the early stages of PSII assembly. Also plays a role in replacement of photodamaged D1 (psbA). Assists YidC in synthesis of chlorophyll-binding proteins. The sequence is that of Photosystem II assembly lipoprotein Ycf48 from Synechococcus sp. (strain CC9902).